Reading from the N-terminus, the 357-residue chain is (+)-eremophilene synthase (357 aa).

Aspartate 100 and glutamate 105 together coordinate Mg(2+). Residues 100-105 (DDDFDE) carry the DDXXE motif motif. A substrate-binding site is contributed by arginine 198. The Mg(2+) site is built by asparagine 244 and serine 248. Residue lysine 251 participates in substrate binding. Aspartate 252 lines the Mg(2+) pocket. Substrate is bound at residue 331 to 332 (RY).

It belongs to the terpene synthase family. The cofactor is Mg(2+).

It carries out the reaction (2E,6E)-farnesyl diphosphate = (+)-eremophilene + diphosphate. It participates in secondary metabolite biosynthesis; terpenoid biosynthesis. Its function is as follows. Catalyzes the conversion of (2E,6E)-farnesyl diphosphate (FPP) to yield the bicyclic sesquiterpene eremophilene via a 1,10-cyclization, which requires the abstraction of the pyrophosphate from FPP to yield the (E,E)-germacradienyl cation. The only accepted substrate is farnesyl diphosphate (FPP). In Gibberella fujikuroi (strain CBS 195.34 / IMI 58289 / NRRL A-6831) (Bakanae and foot rot disease fungus), this protein is (+)-eremophilene synthase.